The sequence spans 340 residues: Polyporopepsin (340 aa).

In terms of domain architecture, Peptidase A1 spans 14–330; the sequence is YVVNVGVGSP…DTTNKRLGLA (317 aa). The active site involves aspartate 32. Residue asparagine 192 is glycosylated (N-linked (GlcNAc...) asparagine). Aspartate 212 is an active-site residue. N-linked (GlcNAc...) asparagine glycosylation is present at asparagine 238.

This sequence belongs to the peptidase A1 family.

It carries out the reaction Milk clotting activity, broad specificity, but fails to cleave 15-Leu-|-Tyr-16 or 16-Tyr-|-Leu-17 of insulin B chain.. This is Polyporopepsin from Irpex lacteus (Milk-white toothed polypore).